The sequence spans 358 residues: Probable dual-specificity RNA methyltransferase RlmN 2 (358 aa).

Glu90 acts as the Proton acceptor in catalysis. The Radical SAM core domain occupies 96–328 (SGIRRTVCVS…VNTCRYTKGD (233 aa)). Cysteines 103 and 334 form a disulfide. Cys110, Cys114, and Cys117 together coordinate [4Fe-4S] cluster. S-adenosyl-L-methionine is bound by residues 160 to 161 (GE), Ser192, 215 to 217 (SLH), and Asn291. Cys334 (S-methylcysteine intermediate) is an active-site residue.

This sequence belongs to the radical SAM superfamily. RlmN family. Requires [4Fe-4S] cluster as cofactor.

The protein resides in the cytoplasm. It catalyses the reaction adenosine(2503) in 23S rRNA + 2 reduced [2Fe-2S]-[ferredoxin] + 2 S-adenosyl-L-methionine = 2-methyladenosine(2503) in 23S rRNA + 5'-deoxyadenosine + L-methionine + 2 oxidized [2Fe-2S]-[ferredoxin] + S-adenosyl-L-homocysteine. The enzyme catalyses adenosine(37) in tRNA + 2 reduced [2Fe-2S]-[ferredoxin] + 2 S-adenosyl-L-methionine = 2-methyladenosine(37) in tRNA + 5'-deoxyadenosine + L-methionine + 2 oxidized [2Fe-2S]-[ferredoxin] + S-adenosyl-L-homocysteine. Specifically methylates position 2 of adenine 2503 in 23S rRNA and position 2 of adenine 37 in tRNAs. The chain is Probable dual-specificity RNA methyltransferase RlmN 2 from Protochlamydia amoebophila (strain UWE25).